A 456-amino-acid polypeptide reads, in one-letter code: UDP-N-acetylmuramoylalanine--D-glutamate ligase (456 aa).

113-119 (GTNGKTT) serves as a coordination point for ATP.

The protein belongs to the MurCDEF family.

The protein localises to the cytoplasm. The catalysed reaction is UDP-N-acetyl-alpha-D-muramoyl-L-alanine + D-glutamate + ATP = UDP-N-acetyl-alpha-D-muramoyl-L-alanyl-D-glutamate + ADP + phosphate + H(+). The protein operates within cell wall biogenesis; peptidoglycan biosynthesis. Functionally, cell wall formation. Catalyzes the addition of glutamate to the nucleotide precursor UDP-N-acetylmuramoyl-L-alanine (UMA). The sequence is that of UDP-N-acetylmuramoylalanine--D-glutamate ligase from Crocosphaera subtropica (strain ATCC 51142 / BH68) (Cyanothece sp. (strain ATCC 51142)).